Consider the following 342-residue polypeptide: Leucine-rich repeat-containing protein 23 (342 aa).

Residues 1–30 (MSDEDDLEDFETDQDDLEREDDEKETEEWE) are compositionally biased toward acidic residues. The tract at residues 1 to 42 (MSDEDDLEDFETDQDDLEREDDEKETEEWEDYRKEGEESEDW) is disordered. Positions 3-27 (DEDDLEDFETDQDDLEREDDEKETE) form a coiled coil. 8 LRR repeats span residues 91-112 (HLRY…NHLT), 113-133 (NLLW…NELP), 134-154 (YLQI…ISHP), 155-176 (RLAS…DPQK), 179-199 (SLHT…INLP), 200-221 (KLKN…ENLS), 222-243 (NLTT…SKEM), and 245-266 (SLQY…AKLR). The interval 207-342 (AQNMLKKVEG…PESELDQSST (136 aa)) is interaction with RSPH9. Residues 279–317 (NPCTDENDYRQEALVQIAHLERLDKEFYEEEERAEADEI) enclose the LRRCT domain. The stretch at 306-332 (YEEEERAEADEIRQRMKEEQEQEAEVE) forms a coiled coil. The tract at residues 307–342 (EEEERAEADEIRQRMKEEQEQEAEVEPESELDQSST) is disordered. A compositionally biased stretch (basic and acidic residues) spans 314-324 (ADEIRQRMKEE). Positions 325–342 (QEQEAEVEPESELDQSST) are enriched in acidic residues.

Component of the axonemal radial spoke complex. Interacts with RSPH3. Interacts with RSPH9.

Its subcellular location is the cytoplasm. The protein resides in the cytoskeleton. It is found in the flagellum axoneme. Its function is as follows. Essential for sperm motility and male fertility. Plays an important role in the proper assembly of the third radial spoke (RS3) head and the bridge structure between RS2 and RS3 in the sperm flagella. This is Leucine-rich repeat-containing protein 23 (LRRC23) from Bos taurus (Bovine).